The sequence spans 488 residues: Aspartyl/glutamyl-tRNA(Asn/Gln) amidotransferase subunit B (488 aa).

Belongs to the GatB/GatE family. GatB subfamily. Heterotrimer of A, B and C subunits.

The catalysed reaction is L-glutamyl-tRNA(Gln) + L-glutamine + ATP + H2O = L-glutaminyl-tRNA(Gln) + L-glutamate + ADP + phosphate + H(+). It catalyses the reaction L-aspartyl-tRNA(Asn) + L-glutamine + ATP + H2O = L-asparaginyl-tRNA(Asn) + L-glutamate + ADP + phosphate + 2 H(+). Its function is as follows. Allows the formation of correctly charged Asn-tRNA(Asn) or Gln-tRNA(Gln) through the transamidation of misacylated Asp-tRNA(Asn) or Glu-tRNA(Gln) in organisms which lack either or both of asparaginyl-tRNA or glutaminyl-tRNA synthetases. The reaction takes place in the presence of glutamine and ATP through an activated phospho-Asp-tRNA(Asn) or phospho-Glu-tRNA(Gln). This Chlamydia trachomatis serovar L2 (strain ATCC VR-902B / DSM 19102 / 434/Bu) protein is Aspartyl/glutamyl-tRNA(Asn/Gln) amidotransferase subunit B.